A 205-amino-acid chain; its full sequence is Gap junction epsilon-1 protein (205 aa).

Residues 1-22 lie on the Cytoplasmic side of the membrane; it reads MSLNYIKNFYEGCVKPPTVIGQ. The helical transmembrane segment at 23–43 threads the bilayer; that stretch reads FHTLFFGSVRMFFLGVLGFAV. Topologically, residues 44–74 are extracellular; that stretch reads YGNEALHFSCDPDKREINLFCYNQFRPITPQ. Cystine bridges form between Cys-53-Cys-161 and Cys-64-Cys-147. The chain crosses the membrane as a helical span at residues 75-95; the sequence is VFWALQLVIVLLPGAIFHLYA. Topologically, residues 96–111 are cytoplasmic; that stretch reads ACKSINQDCILQKPVY. The helical transmembrane segment at 112–132 threads the bilayer; that stretch reads TVIYVLSVLLRISLEVFAFWL. Residues 133–170 are Extracellular-facing; it reads QIHLFGFQVKPIYLCDTESLGKKPNILKCMVPEHFEKT. Residues 171–191 form a helical membrane-spanning segment; it reads IFLIAMYTFTVITMVLCVAEV. Residues 192–205 are Cytoplasmic-facing; it reads FEIIFRRSCFLFKR.

Belongs to the connexin family. Beta-type (group I) subfamily. In terms of assembly, a connexon is composed of a hexamer of connexins. As to expression, highly expressed in lens, where it is mainly found in lens fibers and to a lesser extent in lens epithelium. Weakly expressed in retina. Not detected in other tissues tested.

It is found in the cell membrane. In terms of biological role, mediates calcium-independent ATP release, suggesting activity as a hemichannel. Does not form functional gap junctions. May play a non-essential role in eye lens development. This chain is Gap junction epsilon-1 protein, found in Mus musculus (Mouse).